The chain runs to 209 residues: A-type ATP synthase subunit D (209 aa).

It belongs to the V-ATPase D subunit family. In terms of assembly, has multiple subunits with at least A(3), B(3), C, D, E, F, H, I and proteolipid K(x).

The protein localises to the cell membrane. In terms of biological role, component of the A-type ATP synthase that produces ATP from ADP in the presence of a proton gradient across the membrane. The protein is A-type ATP synthase subunit D of Sulfolobus acidocaldarius (strain ATCC 33909 / DSM 639 / JCM 8929 / NBRC 15157 / NCIMB 11770).